Here is a 408-residue protein sequence, read N- to C-terminus: tRNA-specific 2-thiouridylase MnmA (408 aa).

ATP is bound by residues 27–34 and L53; that span reads AMSGGVDS. Residue C121 is the Nucleophile of the active site. Cysteines 121 and 222 form a disulfide. An ATP-binding site is contributed by G145. The tract at residues 172 to 174 is interaction with tRNA; the sequence is RDQ. C222 serves as the catalytic Cysteine persulfide intermediate.

This sequence belongs to the MnmA/TRMU family.

Its subcellular location is the cytoplasm. It catalyses the reaction S-sulfanyl-L-cysteinyl-[protein] + uridine(34) in tRNA + AH2 + ATP = 2-thiouridine(34) in tRNA + L-cysteinyl-[protein] + A + AMP + diphosphate + H(+). In terms of biological role, catalyzes the 2-thiolation of uridine at the wobble position (U34) of tRNA, leading to the formation of s(2)U34. The polypeptide is tRNA-specific 2-thiouridylase MnmA (Rhizobium etli (strain ATCC 51251 / DSM 11541 / JCM 21823 / NBRC 15573 / CFN 42)).